The chain runs to 279 residues: 3-methyl-2-oxobutanoate hydroxymethyltransferase (279 aa).

Mg(2+) contacts are provided by aspartate 43 and aspartate 82. Residues 43-44 (DS), aspartate 82, and lysine 112 each bind 3-methyl-2-oxobutanoate. Glutamate 114 contributes to the Mg(2+) binding site. Residue glutamate 181 is the Proton acceptor of the active site.

This sequence belongs to the PanB family. In terms of assembly, homodecamer; pentamer of dimers. Mg(2+) is required as a cofactor.

Its subcellular location is the cytoplasm. It carries out the reaction 3-methyl-2-oxobutanoate + (6R)-5,10-methylene-5,6,7,8-tetrahydrofolate + H2O = 2-dehydropantoate + (6S)-5,6,7,8-tetrahydrofolate. The protein operates within cofactor biosynthesis; (R)-pantothenate biosynthesis; (R)-pantoate from 3-methyl-2-oxobutanoate: step 1/2. Functionally, catalyzes the reversible reaction in which hydroxymethyl group from 5,10-methylenetetrahydrofolate is transferred onto alpha-ketoisovalerate to form ketopantoate. This is 3-methyl-2-oxobutanoate hydroxymethyltransferase from Geobacillus kaustophilus (strain HTA426).